A 222-amino-acid polypeptide reads, in one-letter code: Cytidylate kinase (222 aa).

Residue 11-19 participates in ATP binding; it reads GPAGAGKST.

This sequence belongs to the cytidylate kinase family. Type 1 subfamily.

The protein localises to the cytoplasm. It catalyses the reaction CMP + ATP = CDP + ADP. The enzyme catalyses dCMP + ATP = dCDP + ADP. This Desulforamulus reducens (strain ATCC BAA-1160 / DSM 100696 / MI-1) (Desulfotomaculum reducens) protein is Cytidylate kinase.